Here is a 148-residue protein sequence, read N- to C-terminus: Deoxyuridine 5'-triphosphate nucleotidohydrolase (148 aa).

Substrate contacts are provided by residues 65–67 (RSG), Asn-78, 82–84 (TID), and Lys-92.

The protein belongs to the dUTPase family. Mg(2+) is required as a cofactor.

It catalyses the reaction dUTP + H2O = dUMP + diphosphate + H(+). Its pathway is pyrimidine metabolism; dUMP biosynthesis; dUMP from dCTP (dUTP route): step 2/2. In terms of biological role, this enzyme is involved in nucleotide metabolism: it produces dUMP, the immediate precursor of thymidine nucleotides and it decreases the intracellular concentration of dUTP so that uracil cannot be incorporated into DNA. This is Deoxyuridine 5'-triphosphate nucleotidohydrolase from Chlorobium phaeovibrioides (strain DSM 265 / 1930) (Prosthecochloris vibrioformis (strain DSM 265)).